Reading from the N-terminus, the 442-residue chain is Exodeoxyribonuclease 7 large subunit (442 aa).

Belongs to the XseA family. In terms of assembly, heterooligomer composed of large and small subunits.

The protein resides in the cytoplasm. The catalysed reaction is Exonucleolytic cleavage in either 5'- to 3'- or 3'- to 5'-direction to yield nucleoside 5'-phosphates.. Its function is as follows. Bidirectionally degrades single-stranded DNA into large acid-insoluble oligonucleotides, which are then degraded further into small acid-soluble oligonucleotides. The protein is Exodeoxyribonuclease 7 large subunit of Shewanella woodyi (strain ATCC 51908 / MS32).